Here is a 907-residue protein sequence, read N- to C-terminus: CRM-domain containing factor CFM3B, chloroplastic (907 aa).

A chloroplast-targeting transit peptide spans 1–59 (MAINSSHHFCPMTTTTTTSAKFVDSLGSSFCKFHGTSSSISLRSYRFGFSFMKNVKRLS). Disordered stretches follow at residues 62-89 (GSSS…SKVV) and 101-123 (LGVI…GSSS). Polar residues predominate over residues 70-84 (RNENWNRTQKQNQFR). CRM domains follow at residues 220–316 (MTLS…DGSG) and 421–518 (STLG…EVGE). A coiled-coil region spans residues 621–654 (SAKLVRKLERKLAFAEKKLLKAERALAKVEESLK). The CRM 3 domain maps to 663–763 (EGITEEERFM…KDYKRPTTLR (101 aa)). The interval 824–907 (MAYSSDEETE…LQNEELDVQP (84 aa)) is disordered. 2 stretches are compositionally biased toward acidic residues: residues 828–857 (SDEE…DEEG) and 868–881 (TDVE…DTDF). A compositionally biased stretch (polar residues) spans 882–897 (GDNSASSTTPETTFVE).

In terms of assembly, interacts with RNA. Part of large ribonucleo-protein particles that contain CAF1 and/or CAF2, and RNC1. Interacts with RFC3 in plastids. In terms of tissue distribution, expressed at low levels in roots and shoots.

It localises to the plastid. It is found in the chloroplast. Its function is as follows. Binds specific group II introns in chloroplasts and facilitates their splicing. Exhibits non-specific action during plastid rRNA biogenesis; RFC3 prevents unaccurate splicing to improve the accuracy of plastid rRNA processing. Acts on subgroup IIB introns. The substrates of the subgroup IIB also require the CRM domain proteins CAF1 or CAF2, with a simultaneous binding of CFM3B and CAF1 or CAF2. Required for seed development. This Arabidopsis thaliana (Mouse-ear cress) protein is CRM-domain containing factor CFM3B, chloroplastic.